Consider the following 335-residue polypeptide: Pro-cathepsin H (335 aa).

The first 22 residues, 1–22 (MWAVLSLLCAGAWLLGPPACGA), serve as a signal peptide directing secretion. Residues 23-97 (SNLAVSSFEK…DEIRHKYLWS (75 aa)) constitute a propeptide that is removed on maturation. 2 N-linked (GlcNAc...) asparagine glycosylation sites follow: asparagine 72 and asparagine 101. 4 disulfide bridges follow: cysteine 102-cysteine 327, cysteine 138-cysteine 181, cysteine 172-cysteine 214, and cysteine 272-cysteine 322. Positions 107-115 (GNYLRGTGP) are excised as a propeptide. Residue cysteine 141 is part of the active site. Residue asparagine 230 is glycosylated (N-linked (GlcNAc...) asparagine). Active-site residues include histidine 281 and asparagine 301.

The protein belongs to the peptidase C1 family. As to quaternary structure, composed of cathepsin H and mini chain; disulfide-linked. Cathepsin H may be split into heavy and light chain. All chains are held together by disulfide bonds.

It localises to the lysosome. It catalyses the reaction Hydrolysis of proteins, acting as an aminopeptidase (notably, cleaving Arg-|-Xaa bonds) as well as an endopeptidase.. Its function is as follows. Important for the overall degradation of proteins in lysosomes. This is Pro-cathepsin H (CTSH) from Sus scrofa (Pig).